A 311-amino-acid polypeptide reads, in one-letter code: Alpha/beta hydrolase domain-containing protein 17C (311 aa).

The segment at 48–67 (EAPASTAQQPPREEGSGEPA) is disordered. Catalysis depends on charge relay system residues S193, D258, and H287.

It belongs to the AB hydrolase superfamily. ABHD17 family. Post-translationally, palmitoylated on cysteine residues located in a cysteine cluster at the N-terminus which promotes membrane localization.

The protein localises to the recycling endosome membrane. Its subcellular location is the cell projection. It localises to the dendritic spine. The protein resides in the postsynaptic density membrane. It catalyses the reaction S-hexadecanoyl-L-cysteinyl-[protein] + H2O = L-cysteinyl-[protein] + hexadecanoate + H(+). Its function is as follows. Hydrolyzes fatty acids from S-acylated cysteine residues in proteins. Has depalmitoylating activity towards NRAS. This chain is Alpha/beta hydrolase domain-containing protein 17C, found in Xenopus laevis (African clawed frog).